Consider the following 282-residue polypeptide: MIYIGLTGWGDHDSIYPPKTASQKKLQAYSSHFPIVELDASFYAIQPARNNEKWVKETPETFQFIVKAYQGMTGHQRGEIPFDSKEEMFDAFKVSLTPYLHSNKLAMVLFQFPPWFDCKKENVAYLRWCKHQMGDIPCALEFRNRSWFSPPFYEQTLSFMKAEGWIHSVCDEPQIGEGSVPTVLRATDENKTLVRFHGRNKQGWMKPDGGKNWREVRYLYRYNQQELEDWKKHLNELQQQCKDVFVLFNNNSGGDAADNGKQMLELLDIEYSGLAPRQLDLF.

Belongs to the UPF0759 family.

The protein is UPF0759 protein YunF (yunF) of Bacillus subtilis (strain 168).